The chain runs to 130 residues: MVRISVLNDCLKSICNASRRGKRQVIVRPSSKVVVKFLSVMQRHGYIGEFEIIDDHRGGKIIVQLNGRLNKTGVISPRFNVQHNRIEQWINYLLPSRGIGIIVLTTSSGILDHEEARRKNVGGKLLGYVY.

The protein belongs to the universal ribosomal protein uS8 family.

In Agaricus bisporus (White button mushroom), this protein is Small ribosomal subunit protein uS8 (rps22).